A 554-amino-acid polypeptide reads, in one-letter code: MAELTISADDIQSAIEEYVGSFTSDTSREEVGTVVDAGDGIAHVEGLPSVMTQELLEFPGGVLGVALNLDEHSVGAVILGDFEKIEEGQQVKRTGEVLSVPVGDAFLGRVVNPLGQPIDGQGDIETDIRRALEIQAPSVVQRQSVKEPLQTGIKAIDAMTPIGRGQRQLIIGDRKTGKTAVCVDTILNQRQNWESGDEKKQVRCVYVAIGQKGTTIASVRRALEEGGAMDYTTIVAAPASDSAGFKWLAPYTGSAIAQHWMYDGKHVLIVFDDLSKQAEAYRAISLLLRRPPGREAYPGDVFYLHSRLLERCAKLSDELGGGSMTGLPIIETKANDISAYIPTNVISITDGQCFLESDLFNQGVRPAINVGVSVSRVGGAAQIKAMKEVAGSLRLDLSQFRELEAFAAFASDLDATSKAQLDRGARLVELLKQPQYQPMPVEEQVVSIFLGTGGHLDSVPVEDVRRFETELLDHMRASEDKILAGIRDTQKLSDEAAEELEKVINNFKKGFAATGGASVVPDEHVEALDEEELEKESVKVKKPAPEKKAKKEQK.

172–179 serves as a coordination point for ATP; that stretch reads GDRKTGKT. Residues 528 to 554 are disordered; it reads LDEEELEKESVKVKKPAPEKKAKKEQK. Positions 535 to 554 are enriched in basic and acidic residues; sequence KESVKVKKPAPEKKAKKEQK.

Belongs to the ATPase alpha/beta chains family. F-type ATPases have 2 components, CF(1) - the catalytic core - and CF(0) - the membrane proton channel. CF(1) has five subunits: alpha(3), beta(3), gamma(1), delta(1), epsilon(1). CF(0) has three main subunits: a(1), b(2) and c(9-12). The alpha and beta chains form an alternating ring which encloses part of the gamma chain. CF(1) is attached to CF(0) by a central stalk formed by the gamma and epsilon chains, while a peripheral stalk is formed by the delta and b chains.

Its subcellular location is the cell membrane. The enzyme catalyses ATP + H2O + 4 H(+)(in) = ADP + phosphate + 5 H(+)(out). Produces ATP from ADP in the presence of a proton gradient across the membrane. The alpha chain is a regulatory subunit. The chain is ATP synthase subunit alpha from Mycolicibacterium paratuberculosis (strain ATCC BAA-968 / K-10) (Mycobacterium paratuberculosis).